A 407-amino-acid chain; its full sequence is Tryptophan synthase beta chain (407 aa).

Residue Lys-91 is modified to N6-(pyridoxal phosphate)lysine.

It belongs to the TrpB family. In terms of assembly, tetramer of two alpha and two beta chains. It depends on pyridoxal 5'-phosphate as a cofactor.

The enzyme catalyses (1S,2R)-1-C-(indol-3-yl)glycerol 3-phosphate + L-serine = D-glyceraldehyde 3-phosphate + L-tryptophan + H2O. The protein operates within amino-acid biosynthesis; L-tryptophan biosynthesis; L-tryptophan from chorismate: step 5/5. Its function is as follows. The beta subunit is responsible for the synthesis of L-tryptophan from indole and L-serine. This is Tryptophan synthase beta chain from Streptococcus pneumoniae (strain Hungary19A-6).